Reading from the N-terminus, the 156-residue chain is Small ribosomal subunit protein uS7 (156 aa).

The protein belongs to the universal ribosomal protein uS7 family. In terms of assembly, part of the 30S ribosomal subunit. Contacts proteins S9 and S11.

In terms of biological role, one of the primary rRNA binding proteins, it binds directly to 16S rRNA where it nucleates assembly of the head domain of the 30S subunit. Is located at the subunit interface close to the decoding center, probably blocks exit of the E-site tRNA. The chain is Small ribosomal subunit protein uS7 from Thermoanaerobacter sp. (strain X514).